The following is a 281-amino-acid chain: ATP phosphoribosyltransferase (281 aa).

This sequence belongs to the ATP phosphoribosyltransferase family. Long subfamily. It depends on Mg(2+) as a cofactor.

It localises to the cytoplasm. The enzyme catalyses 1-(5-phospho-beta-D-ribosyl)-ATP + diphosphate = 5-phospho-alpha-D-ribose 1-diphosphate + ATP. Its pathway is amino-acid biosynthesis; L-histidine biosynthesis; L-histidine from 5-phospho-alpha-D-ribose 1-diphosphate: step 1/9. Feedback inhibited by histidine. Catalyzes the condensation of ATP and 5-phosphoribose 1-diphosphate to form N'-(5'-phosphoribosyl)-ATP (PR-ATP). Has a crucial role in the pathway because the rate of histidine biosynthesis seems to be controlled primarily by regulation of HisG enzymatic activity. This Corynebacterium jeikeium (strain K411) protein is ATP phosphoribosyltransferase.